The primary structure comprises 529 residues: Putative cysteine ligase BshC (529 aa).

Residues 450–485 (VKQTKGLENLEKRLLKAQKRNLSDQLQRVIDLQCEL) adopt a coiled-coil conformation.

The protein belongs to the BshC family.

This chain is Putative cysteine ligase BshC, found in Flavobacterium johnsoniae (strain ATCC 17061 / DSM 2064 / JCM 8514 / BCRC 14874 / CCUG 350202 / NBRC 14942 / NCIMB 11054 / UW101) (Cytophaga johnsonae).